The chain runs to 339 residues: Uroporphyrinogen decarboxylase (339 aa).

Residues Arg21–Arg25, Phe40, Asp71, Tyr147, Ser202, and His315 each bind substrate.

The protein belongs to the uroporphyrinogen decarboxylase family. Homodimer.

The protein localises to the cytoplasm. It carries out the reaction uroporphyrinogen III + 4 H(+) = coproporphyrinogen III + 4 CO2. The protein operates within porphyrin-containing compound metabolism; protoporphyrin-IX biosynthesis; coproporphyrinogen-III from 5-aminolevulinate: step 4/4. Its function is as follows. Catalyzes the decarboxylation of four acetate groups of uroporphyrinogen-III to yield coproporphyrinogen-III. In Helicobacter pylori (strain J99 / ATCC 700824) (Campylobacter pylori J99), this protein is Uroporphyrinogen decarboxylase.